The chain runs to 131 residues: Auxin-responsive protein SAUR77 (131 aa).

This sequence belongs to the ARG7 family.

May be involved in the regulation of ethylene receptor signaling. Promotes cell expansion and plant growth. The chain is Auxin-responsive protein SAUR77 from Arabidopsis thaliana (Mouse-ear cress).